Consider the following 107-residue polypeptide: Diuretic hormone 45 (107 aa).

Positions 1–44 (LYAMSPMAARYSAGAPWLYLLADMPRDSQRLVDPADLHEGRARP) are excised as a propeptide. Valine amide is present on Val91.

Expressed in corpora cardiaca (CC), corpora allata (CA), antennal lobe (AL) and gnathal ganglion (GNG) (at protein level). Expression in AL and GNG detected in some animals, in CC and CA in few animals (at protein level).

Its subcellular location is the secreted. Its function is as follows. Regulation of fluid secretion. In Agrotis ipsilon (Black cutworm moth), this protein is Diuretic hormone 45.